The chain runs to 174 residues: ATP synthase subunit delta (174 aa).

This sequence belongs to the ATPase delta chain family. F-type ATPases have 2 components, F(1) - the catalytic core - and F(0) - the membrane proton channel. F(1) has five subunits: alpha(3), beta(3), gamma(1), delta(1), epsilon(1). F(0) has three main subunits: a(1), b(2) and c(10-14). The alpha and beta chains form an alternating ring which encloses part of the gamma chain. F(1) is attached to F(0) by a central stalk formed by the gamma and epsilon chains, while a peripheral stalk is formed by the delta and b chains.

Its subcellular location is the cell inner membrane. Its function is as follows. F(1)F(0) ATP synthase produces ATP from ADP in the presence of a proton or sodium gradient. F-type ATPases consist of two structural domains, F(1) containing the extramembraneous catalytic core and F(0) containing the membrane proton channel, linked together by a central stalk and a peripheral stalk. During catalysis, ATP synthesis in the catalytic domain of F(1) is coupled via a rotary mechanism of the central stalk subunits to proton translocation. This protein is part of the stalk that links CF(0) to CF(1). It either transmits conformational changes from CF(0) to CF(1) or is implicated in proton conduction. This is ATP synthase subunit delta from Helicobacter hepaticus (strain ATCC 51449 / 3B1).